Consider the following 254-residue polypeptide: O-antigen biosynthesis glycosyltransferase WbnJ (254 aa).

It belongs to the glycosyltransferase 2 family.

It catalyses the reaction an N-acetyl-alpha-D-galactosaminyl derivative + UDP-alpha-D-galactose = a beta-D-galactosyl-(1-&gt;3)-N-acetyl-alpha-D-galactosaminyl derivative + UDP + H(+). It carries out the reaction alpha-D-GalNAc-(1-&gt;3)-alpha-D-GalNAc-di-trans,octa-cis-undecaprenyl diphosphate + UDP-alpha-D-galactose = beta-D-Gal-(1-&gt;3)-alpha-D-GalNAc-(1-&gt;3)-alpha-D-GalNAc-di-trans,octa-cis-undecaprenyl diphosphate + UDP + H(+). It functions in the pathway bacterial outer membrane biogenesis; LPS O-antigen biosynthesis. In terms of biological role, involved in the assembly of the O-repeating unit during O-antigen biosynthesis. In Escherichia coli, this protein is O-antigen biosynthesis glycosyltransferase WbnJ.